Reading from the N-terminus, the 354-residue chain is 4-hydroxy-3-methylbut-2-en-1-yl diphosphate synthase (flavodoxin) (354 aa).

Positions 262, 265, 297, and 304 each coordinate [4Fe-4S] cluster.

It belongs to the IspG family. The cofactor is [4Fe-4S] cluster.

The enzyme catalyses (2E)-4-hydroxy-3-methylbut-2-enyl diphosphate + oxidized [flavodoxin] + H2O + 2 H(+) = 2-C-methyl-D-erythritol 2,4-cyclic diphosphate + reduced [flavodoxin]. It participates in isoprenoid biosynthesis; isopentenyl diphosphate biosynthesis via DXP pathway; isopentenyl diphosphate from 1-deoxy-D-xylulose 5-phosphate: step 5/6. In terms of biological role, converts 2C-methyl-D-erythritol 2,4-cyclodiphosphate (ME-2,4cPP) into 1-hydroxy-2-methyl-2-(E)-butenyl 4-diphosphate. The polypeptide is 4-hydroxy-3-methylbut-2-en-1-yl diphosphate synthase (flavodoxin) (Helicobacter hepaticus (strain ATCC 51449 / 3B1)).